A 155-amino-acid chain; its full sequence is 2-C-methyl-D-erythritol 2,4-cyclodiphosphate synthase (155 aa).

Residues Asp8 and His10 each coordinate a divalent metal cation. 4-CDP-2-C-methyl-D-erythritol 2-phosphate-binding positions include 8-10 and 34-35; these read DVH and HS. His42 contacts a divalent metal cation. Residues 56–58, 61–65, 132–135, and Arg142 each bind 4-CDP-2-C-methyl-D-erythritol 2-phosphate; these read DIG, FPDKD, and TTTE.

The protein belongs to the IspF family. Homotrimer. Requires a divalent metal cation as cofactor.

It carries out the reaction 4-CDP-2-C-methyl-D-erythritol 2-phosphate = 2-C-methyl-D-erythritol 2,4-cyclic diphosphate + CMP. Its pathway is isoprenoid biosynthesis; isopentenyl diphosphate biosynthesis via DXP pathway; isopentenyl diphosphate from 1-deoxy-D-xylulose 5-phosphate: step 4/6. Involved in the biosynthesis of isopentenyl diphosphate (IPP) and dimethylallyl diphosphate (DMAPP), two major building blocks of isoprenoid compounds. Catalyzes the conversion of 4-diphosphocytidyl-2-C-methyl-D-erythritol 2-phosphate (CDP-ME2P) to 2-C-methyl-D-erythritol 2,4-cyclodiphosphate (ME-CPP) with a corresponding release of cytidine 5-monophosphate (CMP). The polypeptide is 2-C-methyl-D-erythritol 2,4-cyclodiphosphate synthase (Desulfatibacillum aliphaticivorans).